Reading from the N-terminus, the 470-residue chain is Flotillin-like protein 1 (470 aa).

Cys35 carries the S-palmitoyl cysteine lipid modification. The stretch at 305 to 354 (EYETKVQEANWELYNKQKQAEAVLYEKQKQAEAQKAQADAAFYSKQKEAE) forms a coiled coil.

It belongs to the band 7/mec-2 family. Flotillin subfamily. Post-translationally, may be palmitoylated.

It is found in the cell membrane. It localises to the membrane. The protein resides in the caveola. Functionally, may act as a scaffolding protein within caveolar membranes, functionally participating in formation of caveolae or caveolae-like vesicles. The polypeptide is Flotillin-like protein 1 (FLOT1) (Arabidopsis thaliana (Mouse-ear cress)).